The following is a 432-amino-acid chain: Enolase (432 aa).

A (2R)-2-phosphoglycerate-binding site is contributed by Q167. Catalysis depends on E209, which acts as the Proton donor. Residues D246, E289, and D316 each coordinate Mg(2+). (2R)-2-phosphoglycerate contacts are provided by K341, R370, S371, and K392. The Proton acceptor role is filled by K341.

The protein belongs to the enolase family. Mg(2+) is required as a cofactor.

The protein resides in the cytoplasm. The protein localises to the secreted. Its subcellular location is the cell surface. The catalysed reaction is (2R)-2-phosphoglycerate = phosphoenolpyruvate + H2O. It functions in the pathway carbohydrate degradation; glycolysis; pyruvate from D-glyceraldehyde 3-phosphate: step 4/5. Catalyzes the reversible conversion of 2-phosphoglycerate (2-PG) into phosphoenolpyruvate (PEP). It is essential for the degradation of carbohydrates via glycolysis. The protein is Enolase of Thermotoga neapolitana (strain ATCC 49049 / DSM 4359 / NBRC 107923 / NS-E).